The primary structure comprises 247 residues: PHD finger protein ALFIN-LIKE 3 (247 aa).

Positions 147-178 (DRSGVDSSGKSKHSTKRTGEGQVKRSRVVAEE) are disordered. A PHD-type zinc finger spans residues 188 to 240 (ETFCGTCGGLYNANEFWIGCDICERWFHGKCVRITPAKAEHIKHYKCPDCSSS).

Belongs to the Alfin family. In terms of assembly, interacts with H3K4me3 and to a lesser extent with H3K4me2.

Its subcellular location is the nucleus. In terms of biological role, histone-binding component that specifically recognizes H3 tails trimethylated on 'Lys-4' (H3K4me3), which mark transcription start sites of virtually all active genes. The protein is PHD finger protein ALFIN-LIKE 3 of Oryza sativa subsp. indica (Rice).